The primary structure comprises 313 residues: GDP-D-glycero-alpha-D-manno-heptose dehydrogenase (313 aa).

Residues 13 to 14, 33 to 39, F37, 57 to 58, L77, and 144 to 148 contribute to the NADH site; these read YI, DNLMFDQ, DA, and YGIDK. Residue T168 participates in GDP binding. NADH is bound by residues V169 and 175–177; that span reads RMR. GDP is bound by residues 179-184, 196-198, R204, K242, and R270; these read DLLVND and VLF. N311 is an NADH binding site.

As to quaternary structure, homotetramer. NAD(+) is required as a cofactor.

The enzyme catalyses GDP-D-glycero-alpha-D-manno-heptose + 2-oxoglutarate = GDP-D-glycero-4-keto-alpha-D-lyxo-heptose + (S)-2-hydroxyglutarate. Its pathway is capsule biogenesis; capsule polysaccharide biosynthesis. Functionally, NAD-dependent dehydrogenase involved in the biosynthesis of heptose moieties with a hydroxyl group at C6 found on the capsular polysaccharide (CPS) of C.jejuni. Catalyzes the initial oxidation of C4 of the GDP-D-glycero-alpha-D-manno-heptose to form GDP-D-glycero-4-keto-alpha-D-lyxo-heptose in the presence of alpha-ketoglutarate required to recycle the NADH nucleotide. The chain is GDP-D-glycero-alpha-D-manno-heptose dehydrogenase from Campylobacter jejuni subsp. jejuni serotype O:2 (strain ATCC 700819 / NCTC 11168).